A 205-amino-acid chain; its full sequence is Outer-membrane lipoprotein LolB (205 aa).

Positions 1-17 (MFLRHCITFTLIALLAG) are cleaved as a signal peptide. Cysteine 18 carries N-palmitoyl cysteine lipidation. Residue cysteine 18 is the site of S-diacylglycerol cysteine attachment.

Belongs to the LolB family. Monomer.

It localises to the cell outer membrane. In terms of biological role, plays a critical role in the incorporation of lipoproteins in the outer membrane after they are released by the LolA protein. The chain is Outer-membrane lipoprotein LolB from Pseudomonas putida (strain ATCC 47054 / DSM 6125 / CFBP 8728 / NCIMB 11950 / KT2440).